The sequence spans 87 residues: Small ribosomal subunit protein uS15 (87 aa).

It belongs to the universal ribosomal protein uS15 family. In terms of assembly, part of the 30S ribosomal subunit. Forms a bridge to the 50S subunit in the 70S ribosome, contacting the 23S rRNA.

Functionally, one of the primary rRNA binding proteins, it binds directly to 16S rRNA where it helps nucleate assembly of the platform of the 30S subunit by binding and bridging several RNA helices of the 16S rRNA. Its function is as follows. Forms an intersubunit bridge (bridge B4) with the 23S rRNA of the 50S subunit in the ribosome. In Acetivibrio thermocellus (strain ATCC 27405 / DSM 1237 / JCM 9322 / NBRC 103400 / NCIMB 10682 / NRRL B-4536 / VPI 7372) (Clostridium thermocellum), this protein is Small ribosomal subunit protein uS15.